The sequence spans 218 residues: Large ribosomal subunit protein eL13 (218 aa).

Positions 196–218 are disordered; that stretch reads AKRAKEAAESEDAAKGDPKKAKK. Positions 199–218 are enriched in basic and acidic residues; the sequence is AKEAAESEDAAKGDPKKAKK.

This sequence belongs to the eukaryotic ribosomal protein eL13 family. As to quaternary structure, component of the 60S large ribosomal subunit (LSU).

It is found in the cytoplasm. Its function is as follows. Component of the ribosome, a large ribonucleoprotein complex responsible for the synthesis of proteins in the cell. The small ribosomal subunit (SSU) binds messenger RNAs (mRNAs) and translates the encoded message by selecting cognate aminoacyl-transfer RNA (tRNA) molecules. The large subunit (LSU) contains the ribosomal catalytic site termed the peptidyl transferase center (PTC), which catalyzes the formation of peptide bonds, thereby polymerizing the amino acids delivered by tRNAs into a polypeptide chain. The nascent polypeptides leave the ribosome through a tunnel in the LSU and interact with protein factors that function in enzymatic processing, targeting, and the membrane insertion of nascent chains at the exit of the ribosomal tunnel. As part of the LSU, it is probably required for its formation and the maturation of rRNAs. The polypeptide is Large ribosomal subunit protein eL13 (RpL13) (Drosophila melanogaster (Fruit fly)).